The sequence spans 810 residues: Actin-regulating kinase PRK1 (810 aa).

In terms of domain architecture, Protein kinase spans 22–298 (AKIIKYLTSG…CQVLEEVSRL (277 aa)). ATP contacts are provided by residues 28-36 (LTSGGFAQV) and lysine 56. The active-site Proton acceptor is aspartate 158. 3 positions are modified to phosphoserine: serine 402, serine 428, and serine 484. Disordered stretches follow at residues 552–668 (FTGN…NVNI) and 733–761 (GVLD…HLRT). A Phosphothreonine modification is found at threonine 553. Residues 553 to 566 (TGNSVNNSRSASFD) are compositionally biased toward polar residues. A Phosphoserine modification is found at serine 556. Residues 567–588 (NNNVNGNGNNTNRRLVSSSTSS) show a composition bias toward low complexity. 2 stretches are compositionally biased toward basic and acidic residues: residues 594 to 612 (SDTK…EKRR) and 622 to 639 (FDQH…DYYR). Positions 645 to 658 (KKTQASAKTTSKPT) are enriched in low complexity. A compositionally biased stretch (basic and acidic residues) spans 733–748 (GVLDIKTKSNGKDKSR). The interval 743 to 756 (GKDKSRPPRPPPKP) is interaction with SH3 domain of ABP1.

It belongs to the protein kinase superfamily. Ser/Thr protein kinase family. In terms of assembly, interacts with ABP1, which is required for proper actin patch localization.

The protein localises to the cytoplasm. It is found in the cytoskeleton. The protein resides in the actin patch. It carries out the reaction L-seryl-[protein] + ATP = O-phospho-L-seryl-[protein] + ADP + H(+). The catalysed reaction is L-threonyl-[protein] + ATP = O-phospho-L-threonyl-[protein] + ADP + H(+). Its function is as follows. Protein kinase involved in the regulation of actin cytoskeleton organization and endocytosis. Phosphorylates PAN1 which disrupts the interaction between PAN1 and END3, and between PAN1 and SLA1. Phosphorylates SCD5. Preferentially, phosphorylates substrates on threonine residues in a [L/I/V/M]-x-x-[Q/N/T/S]-x-T-G motif. The chain is Actin-regulating kinase PRK1 (PRK1) from Saccharomyces cerevisiae (strain ATCC 204508 / S288c) (Baker's yeast).